Consider the following 428-residue polypeptide: 3-phosphoshikimate 1-carboxyvinyltransferase (428 aa).

Residues Lys19, Ser20, and Arg24 each coordinate 3-phosphoshikimate. Lys19 lines the phosphoenolpyruvate pocket. Residues Gly91 and Arg119 each coordinate phosphoenolpyruvate. The 3-phosphoshikimate site is built by Ser164, Gln166, Asp312, and Lys339. Gln166 provides a ligand contact to phosphoenolpyruvate. Asp312 functions as the Proton acceptor in the catalytic mechanism. Residues Arg343 and Arg386 each coordinate phosphoenolpyruvate.

It belongs to the EPSP synthase family. Monomer.

The protein resides in the cytoplasm. The enzyme catalyses 3-phosphoshikimate + phosphoenolpyruvate = 5-O-(1-carboxyvinyl)-3-phosphoshikimate + phosphate. It functions in the pathway metabolic intermediate biosynthesis; chorismate biosynthesis; chorismate from D-erythrose 4-phosphate and phosphoenolpyruvate: step 6/7. Functionally, catalyzes the transfer of the enolpyruvyl moiety of phosphoenolpyruvate (PEP) to the 5-hydroxyl of shikimate-3-phosphate (S3P) to produce enolpyruvyl shikimate-3-phosphate and inorganic phosphate. The chain is 3-phosphoshikimate 1-carboxyvinyltransferase from Bacillus subtilis (strain 168).